The chain runs to 934 residues: Leucine--tRNA ligase 1 (934 aa).

A 'HIGH' region motif is present at residues 41 to 51; that stretch reads PYTNSPMHVGH. Residues 616-620 carry the 'KMSKS' region motif; that stretch reads KMSKS. An ATP-binding site is contributed by Lys-619.

This sequence belongs to the class-I aminoacyl-tRNA synthetase family.

The protein localises to the cytoplasm. The catalysed reaction is tRNA(Leu) + L-leucine + ATP = L-leucyl-tRNA(Leu) + AMP + diphosphate. In Saccharolobus solfataricus (strain ATCC 35092 / DSM 1617 / JCM 11322 / P2) (Sulfolobus solfataricus), this protein is Leucine--tRNA ligase 1.